Here is a 1149-residue protein sequence, read N- to C-terminus: ATP-dependent helicase/deoxyribonuclease subunit B (1149 aa).

Positions 1 to 276 constitute a UvrD-like helicase ATP-binding domain; sequence MAIRYIFGRA…INLDIEERKV (276 aa). Residue 8-15 coordinates ATP; sequence GRAGRGKS. The region spanning 273–586 is the UvrD-like helicase C-terminal domain; it reads ERKVLPKEKE…LVGSIERSKS (314 aa). [4Fe-4S] cluster contacts are provided by C786, C1105, C1108, and C1114.

This sequence belongs to the helicase family. AddB/RexB type 1 subfamily. Heterodimer of AddA and AddB. Mg(2+) is required as a cofactor. The cofactor is [4Fe-4S] cluster.

In terms of biological role, the heterodimer acts as both an ATP-dependent DNA helicase and an ATP-dependent, dual-direction single-stranded exonuclease. Recognizes the chi site generating a DNA molecule suitable for the initiation of homologous recombination. The AddB subunit has 5' -&gt; 3' nuclease activity but not helicase activity. The polypeptide is ATP-dependent helicase/deoxyribonuclease subunit B (Alkaliphilus metalliredigens (strain QYMF)).